The following is a 234-amino-acid chain: Ribose-5-phosphate isomerase A (234 aa).

Substrate is bound by residues 35–38, 91–94, and 105–108; these read SGTT, DGAD, and KGGG. Glu114 serves as the catalytic Proton acceptor. Residue Lys132 coordinates substrate.

This sequence belongs to the ribose 5-phosphate isomerase family. As to quaternary structure, homodimer.

It catalyses the reaction aldehydo-D-ribose 5-phosphate = D-ribulose 5-phosphate. It functions in the pathway carbohydrate degradation; pentose phosphate pathway; D-ribose 5-phosphate from D-ribulose 5-phosphate (non-oxidative stage): step 1/1. Functionally, catalyzes the reversible conversion of ribose-5-phosphate to ribulose 5-phosphate. This chain is Ribose-5-phosphate isomerase A, found in Methanococcus aeolicus (strain ATCC BAA-1280 / DSM 17508 / OCM 812 / Nankai-3).